A 246-amino-acid chain; its full sequence is Ribonuclease 3 (246 aa).

The RNase III domain maps to 16–146; it reads ATELEAGIGY…LLAAVYLDGG (131 aa). A Mg(2+)-binding site is contributed by glutamate 59. Aspartate 63 is an active-site residue. Asparagine 132 and glutamate 135 together coordinate Mg(2+). The active site involves glutamate 135. The region spanning 173–242 is the DRBM domain; that stretch reads DFKTEFQEMV…ARQVLARFAA (70 aa).

Belongs to the ribonuclease III family. As to quaternary structure, homodimer. Mg(2+) is required as a cofactor.

The protein localises to the cytoplasm. It carries out the reaction Endonucleolytic cleavage to 5'-phosphomonoester.. Digests double-stranded RNA. Involved in the processing of primary rRNA transcript to yield the immediate precursors to the large and small rRNAs (23S and 16S). Processes some mRNAs, and tRNAs when they are encoded in the rRNA operon. Processes pre-crRNA and tracrRNA of type II CRISPR loci if present in the organism. In Geobacter metallireducens (strain ATCC 53774 / DSM 7210 / GS-15), this protein is Ribonuclease 3.